The chain runs to 136 residues: Large ribosomal subunit protein uL16 (136 aa).

Belongs to the universal ribosomal protein uL16 family. As to quaternary structure, part of the 50S ribosomal subunit.

Functionally, binds 23S rRNA and is also seen to make contacts with the A and possibly P site tRNAs. The protein is Large ribosomal subunit protein uL16 of Ruthia magnifica subsp. Calyptogena magnifica.